We begin with the raw amino-acid sequence, 692 residues long: Potassium-transporting ATPase ATP-binding subunit (692 aa).

4 consecutive transmembrane segments (helical) span residues 50–70 (PIMFVVEIGFIITFILSFLPS), 77–97 (GWFNITVSLILLFTVLFANFA), 240–260 (LTLIFLIVVVTLPIFTNYLGF), and 266–286 (VLVALLVCLIPTTIGGLLSAI). D319 functions as the 4-aspartylphosphate intermediate in the catalytic mechanism. Residues D356, E360, 388–395 (FKAETRMS), and K407 contribute to the ATP site. 2 residues coordinate Mg(2+): D530 and D534. 3 helical membrane passes run 600 to 620 (FAIIPAMFTLAIPQMEALNIM), 628 to 648 (AILSALIFNAVIIPLLIPLAM), and 672 to 692 (GGVIVPFIGIKVIDIIVGLFI).

Belongs to the cation transport ATPase (P-type) (TC 3.A.3) family. Type IA subfamily. The system is composed of three essential subunits: KdpA, KdpB and KdpC.

It localises to the cell membrane. The catalysed reaction is K(+)(out) + ATP + H2O = K(+)(in) + ADP + phosphate + H(+). Part of the high-affinity ATP-driven potassium transport (or Kdp) system, which catalyzes the hydrolysis of ATP coupled with the electrogenic transport of potassium into the cytoplasm. This subunit is responsible for energy coupling to the transport system and for the release of the potassium ions to the cytoplasm. This chain is Potassium-transporting ATPase ATP-binding subunit, found in Bacillus cereus (strain 03BB102).